Here is a 317-residue protein sequence, read N- to C-terminus: Acetyl-coenzyme A carboxylase carboxyl transferase subunit alpha (317 aa).

The region spanning 38-292 (TLEERLARLE…DNIIKQSLVE (255 aa)) is the CoA carboxyltransferase C-terminal domain.

The protein belongs to the AccA family. In terms of assembly, acetyl-CoA carboxylase is a heterohexamer composed of biotin carboxyl carrier protein (AccB), biotin carboxylase (AccC) and two subunits each of ACCase subunit alpha (AccA) and ACCase subunit beta (AccD).

It is found in the cytoplasm. It catalyses the reaction N(6)-carboxybiotinyl-L-lysyl-[protein] + acetyl-CoA = N(6)-biotinyl-L-lysyl-[protein] + malonyl-CoA. Its pathway is lipid metabolism; malonyl-CoA biosynthesis; malonyl-CoA from acetyl-CoA: step 1/1. Its function is as follows. Component of the acetyl coenzyme A carboxylase (ACC) complex. First, biotin carboxylase catalyzes the carboxylation of biotin on its carrier protein (BCCP) and then the CO(2) group is transferred by the carboxyltransferase to acetyl-CoA to form malonyl-CoA. This chain is Acetyl-coenzyme A carboxylase carboxyl transferase subunit alpha, found in Oceanobacillus iheyensis (strain DSM 14371 / CIP 107618 / JCM 11309 / KCTC 3954 / HTE831).